Reading from the N-terminus, the 489-residue chain is Cobyric acid synthase (489 aa).

One can recognise a GATase cobBQ-type domain in the interval 247–439 (ALKVVVPVLP…IHGVFDEPAA (193 aa)). Residue Cys-328 is the Nucleophile of the active site. His-431 is a catalytic residue.

The protein belongs to the CobB/CobQ family. CobQ subfamily.

Its pathway is cofactor biosynthesis; adenosylcobalamin biosynthesis. Its function is as follows. Catalyzes amidations at positions B, D, E, and G on adenosylcobyrinic A,C-diamide. NH(2) groups are provided by glutamine, and one molecule of ATP is hydrogenolyzed for each amidation. The polypeptide is Cobyric acid synthase (Marinobacter nauticus (strain ATCC 700491 / DSM 11845 / VT8) (Marinobacter aquaeolei)).